The primary structure comprises 381 residues: Chitin deacetylase 8 (381 aa).

The N-terminal stretch at 1–18 (MKRLSVLCSLLLVAAALG) is a signal peptide. Disulfide bonds link C27–C39 and C32–C37. Residues D63, H117, and H121 each contribute to the Zn(2+) site. 5 disulfides stabilise this stretch: C86-C335, C211-C216, C240-C246, C343-C365, and C348-C368. N171 carries an N-linked (GlcNAc...) asparagine glycan.

The protein belongs to the carbohydrate esterase 4 (CE4) family. It depends on Zn(2+) as a cofactor. Strongly expressed in the midgut. Has little or no expression in other tissues tested.

Its subcellular location is the secreted. The enzyme catalyses [(1-&gt;4)-N-acetyl-beta-D-glucosaminyl](n) + n H2O = chitosan + n acetate. In terms of biological role, hydrolyzes the N-acetamido groups of N-acetyl-D-glucosamine (GlcNAc) residues in chitin. Shows activity towards the chitinous oligomers GlcNAc(3), GlcNAc(4), GlcNAc(5) and GlcNAc(6), but not GlcNAc or GlcNAc(2). Requires the substrate to occupy subsites 0, +1, and +2 for optimum catalysis. The protein is Chitin deacetylase 8 of Bombyx mori (Silk moth).